A 373-amino-acid polypeptide reads, in one-letter code: tRNA/tmRNA (uracil-C(5))-methyltransferase (373 aa).

Residues Q190, Y219, N224, E240, and D300 each contribute to the S-adenosyl-L-methionine site. C325 serves as the catalytic Nucleophile. The Proton acceptor role is filled by E359.

The protein belongs to the class I-like SAM-binding methyltransferase superfamily. RNA M5U methyltransferase family. TrmA subfamily.

It catalyses the reaction uridine(54) in tRNA + S-adenosyl-L-methionine = 5-methyluridine(54) in tRNA + S-adenosyl-L-homocysteine + H(+). It carries out the reaction uridine(341) in tmRNA + S-adenosyl-L-methionine = 5-methyluridine(341) in tmRNA + S-adenosyl-L-homocysteine + H(+). Functionally, dual-specificity methyltransferase that catalyzes the formation of 5-methyluridine at position 54 (m5U54) in all tRNAs, and that of position 341 (m5U341) in tmRNA (transfer-mRNA). This is tRNA/tmRNA (uracil-C(5))-methyltransferase from Chromohalobacter salexigens (strain ATCC BAA-138 / DSM 3043 / CIP 106854 / NCIMB 13768 / 1H11).